Consider the following 892-residue polypeptide: MRVSYNWLKDYVKVGLSPQELAERLTARGVVVENVVRANPGVEGVVVGRVVAMERHPNADTLWVCQVDVGGGRVLQILTGAQNVTVGALVPAAVPGAKLPGGVTMGVKKLRGLDSHGMLCSEAELQVGDDADGILILPPEPGLEPGMDVAEVLGLNDWIFELDLTANYAAHCQSMLGVAQEVAALVGGEVNRPSTYTPDAPGTDVRNLIAVQIDAPDLCSRYVARVVRGVKIGPSPLWLQARLRAAGMRPINNIVDIANFVMLETGQPLHTFDYAQIRGQRIIVRRARTGERFTTLDGQERVMDESVLVIADAERPVALAGVMGGEDSEVTDQTADILIESAHFDNINNRRTSLRYNLPSEASKRFTKGVDPSGCVAAADRAAQLMAELAGGTVVAGHVDVCPRPAVPPVILLRTERANALTGLKLTPERMAEHLRSLGMAVLTPADLAADLALGAPESDEEPGEDLGGHPVWTALHQVSPVPSDPVVYRTWAEAAWAEVEDAGSRLEALLGGGESDGKAAASGEGVSPGGASDGILVVVVPTRRSDVAVEVDLIEEIARCEGYDAIPLELPVLSSHRGGRSRQGEVKLAARRALAAAGLTEVLTHSLTHPRVYDMLALPEDDPNRRCLALANPMYEDRSTLRTMLLPCLLDVVRYNANRQVRDLAIFEISHVYRPVEGEQLPDEPLMIGLAMTGNLAPLGWNSPERPADFFALKGVVEHLLAELGVPDARFERSAHPSLHPGRQAALVVGGKPVGLLGELHPQVQERWELPGRVYVAELAFAPLMEAMLPQAVYRPVPRFPAVTRDVAVVVDLDLTAHRLETAIREAGGDLLEEVRLFDVYQGERVAEGRRSLAYRLVYRAADRTLTDEELEPVHNRVREALKALGAELRS.

The region spanning 39–150 is the tRNA-binding domain; sequence NPGVEGVVVG…PGLEPGMDVA (112 aa). Residues 406–569 enclose the B5 domain; that stretch reads AVPPVILLRT…RCEGYDAIPL (164 aa). The interval 442 to 518 is insert; the sequence is VLTPADLAAD…ALLGGGESDG (77 aa). 4 residues coordinate Mg(2+): aspartate 547, aspartate 553, glutamate 556, and glutamate 557. The FDX-ACB domain maps to 799 to 891; the sequence is PRFPAVTRDV…ALKALGAELR (93 aa).

The protein belongs to the phenylalanyl-tRNA synthetase beta subunit family. Type 1 subfamily. In terms of assembly, tetramer of two alpha and two beta subunits. Mg(2+) serves as cofactor.

It is found in the cytoplasm. The catalysed reaction is tRNA(Phe) + L-phenylalanine + ATP = L-phenylalanyl-tRNA(Phe) + AMP + diphosphate + H(+). The protein is Phenylalanine--tRNA ligase beta subunit of Symbiobacterium thermophilum (strain DSM 24528 / JCM 14929 / IAM 14863 / T).